The following is a 361-amino-acid chain: Putative agmatine deiminase (361 aa).

The active-site Amidino-cysteine intermediate is Cys-354.

The protein belongs to the agmatine deiminase family.

The catalysed reaction is agmatine + H2O = N-carbamoylputrescine + NH4(+). This chain is Putative agmatine deiminase, found in Streptococcus pneumoniae (strain 70585).